We begin with the raw amino-acid sequence, 230 residues long: 2-C-methyl-D-erythritol 4-phosphate cytidylyltransferase (230 aa).

This sequence belongs to the IspD/TarI cytidylyltransferase family. IspD subfamily.

It carries out the reaction 2-C-methyl-D-erythritol 4-phosphate + CTP + H(+) = 4-CDP-2-C-methyl-D-erythritol + diphosphate. The protein operates within isoprenoid biosynthesis; isopentenyl diphosphate biosynthesis via DXP pathway; isopentenyl diphosphate from 1-deoxy-D-xylulose 5-phosphate: step 2/6. Functionally, catalyzes the formation of 4-diphosphocytidyl-2-C-methyl-D-erythritol from CTP and 2-C-methyl-D-erythritol 4-phosphate (MEP). In Shewanella halifaxensis (strain HAW-EB4), this protein is 2-C-methyl-D-erythritol 4-phosphate cytidylyltransferase.